Here is a 563-residue protein sequence, read N- to C-terminus: MKIINSFVFIFVLLFVFNTNAIKLSEDEKYSIEEKPEWYSIDSNFAVSPGKISDALGWGYYKNEILKDGWGKLYVEMNKFMTPENSSIYYEATGYLEGYLTWSTTWNYSQAYFQNYMNGTNESDIPTPLVEFLKINYDWMTSTFSNRDESVYDTQVSNVIYQFEGFARGYQQAADSDKQLTTLQLLLLQYAGDLEDVAGYLEYEMAQNKTEYINRVKSLKEIETLFAVKGRCSGLVRITPDYGELFISHTTWGSYFTAGYRIFKRIIIPDPTVPGNEILFASYAGVLTSDDDFFMIPSTEMVIIETTNDILNTSLYQYVTPNSLLYFVRSIIANRLSNTAQEWTNNFIQYNSGTYSNQWMIVDYKLFTPYQPLQPNTFWIIEQLPGGFMSADMTEVLALGNWPSFNRPFFPEIYDAMGYSYYEKLYGDIISYDLNPRSKMFRRDVPNVMSLDGMQQIMTQNNYKSDPFSGGFPGNAIAARYDLGGGPAEPLSWSFIGLHGAIDSKITSYSLLQQNQAIAINGMTVTPDCPPFTWNSNWSTVSAHYGSPETFDFDWISITITDK.

The N-terminal stretch at M1–A21 is a signal peptide. N85, N107, N118, N121, N208, N312, and N537 each carry an N-linked (GlcNAc...) asparagine glycan.

This sequence belongs to the phospholipase B-like family.

The protein resides in the secreted. In terms of biological role, probable phospholipase. This is Phospholipase B-like protein F (plbF) from Dictyostelium discoideum (Social amoeba).